The chain runs to 720 residues: Polyribonucleotide nucleotidyltransferase (720 aa).

2 residues coordinate Mg(2+): D487 and D493. The KH domain maps to 554–613 (PRIETFKIPTDKIREVIGTGGKVIREIVEKTGAKVNIEDDGTVKVASSDGEAMKAAIKWI). The S1 motif domain occupies 623 to 691 (GQIYDGTVVK…DRGKTRLSMK (69 aa)). A disordered region spans residues 692–720 (AVDQTTGEDLEAKQKAEGGAEAPREAAGE). Residues 701–720 (LEAKQKAEGGAEAPREAAGE) show a composition bias toward basic and acidic residues.

This sequence belongs to the polyribonucleotide nucleotidyltransferase family. Requires Mg(2+) as cofactor.

The protein localises to the cytoplasm. The enzyme catalyses RNA(n+1) + phosphate = RNA(n) + a ribonucleoside 5'-diphosphate. In terms of biological role, involved in mRNA degradation. Catalyzes the phosphorolysis of single-stranded polyribonucleotides processively in the 3'- to 5'-direction. This chain is Polyribonucleotide nucleotidyltransferase, found in Bradyrhizobium sp. (strain BTAi1 / ATCC BAA-1182).